Consider the following 225-residue polypeptide: Small ribosomal subunit protein uS5 (225 aa).

One can recognise an S5 DRBM domain in the interval 57 to 120 (LEEQVLDVKL…AQAKLSLIKV (64 aa)).

This sequence belongs to the universal ribosomal protein uS5 family. Part of the 30S ribosomal subunit. Contacts protein S4.

Functionally, with S4 and S12 plays an important role in translational accuracy. The sequence is that of Small ribosomal subunit protein uS5 from Methanococcus vannielii (strain ATCC 35089 / DSM 1224 / JCM 13029 / OCM 148 / SB).